Reading from the N-terminus, the 361-residue chain is Peptide chain release factor 1 (361 aa).

Residue Gln-237 is modified to N5-methylglutamine. The disordered stretch occupies residues 286–306 (AKQDQEQAAKRKSLVGSGDRS).

The protein belongs to the prokaryotic/mitochondrial release factor family. In terms of processing, methylated by PrmC. Methylation increases the termination efficiency of RF1.

It localises to the cytoplasm. Functionally, peptide chain release factor 1 directs the termination of translation in response to the peptide chain termination codons UAG and UAA. This chain is Peptide chain release factor 1, found in Coxiella burnetii (strain CbuG_Q212) (Coxiella burnetii (strain Q212)).